A 354-amino-acid polypeptide reads, in one-letter code: Guanine nucleotide-binding protein G(i) subunit alpha-3 (354 aa).

Gly-2 carries the N-myristoyl glycine lipid modification. Residue Cys-3 is the site of S-palmitoyl cysteine attachment. Positions 32–354 constitute a G-alpha domain; sequence KEVKLLLLGA…KNNLKECGLY (323 aa). The G1 motif stretch occupies residues 35-48; the sequence is KLLLLGAGESGKST. 25 residues coordinate GTP: Gly-42, Glu-43, Ser-44, Gly-45, Lys-46, Ser-47, Thr-48, Asp-150, Ser-151, Leu-175, Arg-176, Thr-177, Arg-178, Val-179, Lys-180, Thr-181, Val-201, Gly-203, Asn-269, Lys-270, Asp-272, Leu-273, Cys-325, Ala-326, and Thr-327. Ser-47 provides a ligand contact to Mg(2+). The G2 motif stretch occupies residues 173–181; it reads DVLRTRVKT. Thr-181 is a Mg(2+) binding site. The interval 196 to 205 is G3 motif; the sequence is FKMFDVGGQR. The interval 265 to 272 is G4 motif; the sequence is ILFLNKKD. Positions 324-329 are G5 motif; it reads TCATDT.

It belongs to the G-alpha family. G(i/o/t/z) subfamily. Heterotrimeric G proteins are composed of 3 units; alpha, beta and gamma. The alpha subunit contains the guanine nucleotide binding site. GTP binding causes dissociation of the heterotrimer, liberating the individual subunits so that they can interact with downstream effector proteins. Forms a complex with CCDC88A/GIV and EGFR which leads to enhanced EGFR signaling and triggering of cell migration; ligand stimulation is required for recruitment of GNAI3 to the complex. Interacts (inactive GDP-bound form) with CCDC88A/GIV (via GBA motif); the interaction leads to activation of GNAI3. Interacts (inactive GDP-bound form) with CCDC88C/DAPLE (via GBA motif); the interaction leads to activation of GNAI3. Interacts (inactive GDP-bound form) with NUCB1 (via GBA motif) and NUCB2 (via GBA motif); the interaction leads to activation of GNAI3. Interacts (inactive GDP-bound form) with PLCD4 (via GBA motif); the interaction leads to activation of GNAI3. Interacts with INSR; the interaction is probably mediated by CCDC88A/GIV. Interacts with GPSM1. Interacts (GDP-bound form) with GPSM2 (via GoLoco domains). Does not interact with RGS2. Interacts with RGS8 and RGS10; this strongly enhances the intrinsic GTPase activity. Interacts with RGS16; this strongly enhances the intrinsic GTPase activity. Interacts with RGS12. Interacts (via active GTP- or inactive GDP-bound form) with RGS14. Interacts (via active GTP-bound form) with TRPC5 (via ANK repeats) in a homotetrameric ion channel; the interaction is direct and activates the channel activity. As to expression, ubiquitously expressed.

Its subcellular location is the cytoplasm. It is found in the cell membrane. The protein resides in the cytoskeleton. It localises to the microtubule organizing center. The protein localises to the centrosome. Functionally, heterotrimeric guanine nucleotide-binding proteins (G proteins) function as transducers downstream of G protein-coupled receptors (GPCRs) in numerous signaling cascades. The alpha chain contains the guanine nucleotide binding site and alternates between an active, GTP-bound state and an inactive, GDP-bound state. Signaling by an activated GPCR promotes GDP release and GTP binding. The alpha subunit has a low GTPase activity that converts bound GTP to GDP, thereby terminating the signal. Both GDP release and GTP hydrolysis are modulated by numerous regulatory proteins. Signaling is mediated via effector proteins, such as adenylate cyclase. Inhibits adenylate cyclase activity, leading to decreased intracellular cAMP levels. Stimulates the activity of receptor-regulated K(+) channels. The active GTP-bound form prevents the association of RGS14 with centrosomes and is required for the translocation of RGS14 from the cytoplasm to the plasma membrane. May play a role in cell division. The active GTP-bound form activates the calcium permeant TRPC5 ion channels. This chain is Guanine nucleotide-binding protein G(i) subunit alpha-3 (GNAI3), found in Cavia porcellus (Guinea pig).